We begin with the raw amino-acid sequence, 225 residues long: Putative membrane protease YugP (225 aa).

Zn(2+) is bound at residue His95. Glu96 is an active-site residue. Residues His99 and His103 each coordinate Zn(2+). Helical transmembrane passes span 116-138 (IFPVVNFASGVAPLLFLGGMLLG), 140-162 (LNLIGLGIILFSAAVFFQLITLP), and 192-212 (VLSAAALTYVAAALVSLFELL).

The protein resides in the cell membrane. This is Putative membrane protease YugP (yugP) from Bacillus subtilis (strain 168).